Here is a 220-residue protein sequence, read N- to C-terminus: Thiamine-phosphate synthase (220 aa).

4-amino-2-methyl-5-(diphosphooxymethyl)pyrimidine is bound by residues 46–50 and N83; that span reads QFREK. Positions 84 and 103 each coordinate Mg(2+). S122 serves as a coordination point for 4-amino-2-methyl-5-(diphosphooxymethyl)pyrimidine. Residue 149-151 coordinates 2-[(2R,5Z)-2-carboxy-4-methylthiazol-5(2H)-ylidene]ethyl phosphate; sequence TNS. K152 provides a ligand contact to 4-amino-2-methyl-5-(diphosphooxymethyl)pyrimidine. 2-[(2R,5Z)-2-carboxy-4-methylthiazol-5(2H)-ylidene]ethyl phosphate is bound by residues G181 and 201-202; that span reads IS.

Belongs to the thiamine-phosphate synthase family. Mg(2+) serves as cofactor.

It carries out the reaction 2-[(2R,5Z)-2-carboxy-4-methylthiazol-5(2H)-ylidene]ethyl phosphate + 4-amino-2-methyl-5-(diphosphooxymethyl)pyrimidine + 2 H(+) = thiamine phosphate + CO2 + diphosphate. The enzyme catalyses 2-(2-carboxy-4-methylthiazol-5-yl)ethyl phosphate + 4-amino-2-methyl-5-(diphosphooxymethyl)pyrimidine + 2 H(+) = thiamine phosphate + CO2 + diphosphate. The catalysed reaction is 4-methyl-5-(2-phosphooxyethyl)-thiazole + 4-amino-2-methyl-5-(diphosphooxymethyl)pyrimidine + H(+) = thiamine phosphate + diphosphate. The protein operates within cofactor biosynthesis; thiamine diphosphate biosynthesis; thiamine phosphate from 4-amino-2-methyl-5-diphosphomethylpyrimidine and 4-methyl-5-(2-phosphoethyl)-thiazole: step 1/1. Its function is as follows. Condenses 4-methyl-5-(beta-hydroxyethyl)thiazole monophosphate (THZ-P) and 2-methyl-4-amino-5-hydroxymethyl pyrimidine pyrophosphate (HMP-PP) to form thiamine monophosphate (TMP). This chain is Thiamine-phosphate synthase, found in Mannheimia succiniciproducens (strain KCTC 0769BP / MBEL55E).